The sequence spans 165 residues: Disulfide bond formation protein B (165 aa).

Residues 1-11 lie on the Cytoplasmic side of the membrane; it reads MICSKVPVRAW. Residues 12 to 28 form a helical membrane-spanning segment; it reads FATLGLGCLGLVAVGMA. Over 29–46 the chain is Periplasmic; it reads LQTLLHLAPCPLCIFQRL. C38 and C41 are oxidised to a cystine. The chain crosses the membrane as a helical span at residues 47 to 61; the sequence is LYIMIGFVGLLGFVL. Over 62–66 the chain is Cytoplasmic; it reads PAGRL. Residues 67–84 traverse the membrane as a helical segment; the sequence is LWSTLAAGLGVLGFGVAA. Topologically, residues 85-142 are periplasmic; the sequence is YQTWMQAFPDLAPECGFTDPNAIERLVDWLGMEWPSMFLATGFCTSRDWELLGLSMAN. A disulfide bridge links C99 with C128. A helical membrane pass occupies residues 143 to 161; it reads WSVLIFAGIVAYAVLLFVR. Topologically, residues 162 to 165 are cytoplasmic; that stretch reads KDRA.

It belongs to the DsbB family.

The protein localises to the cell inner membrane. In terms of biological role, required for disulfide bond formation in some periplasmic proteins. Acts by oxidizing the DsbA protein. The polypeptide is Disulfide bond formation protein B (Dechloromonas aromatica (strain RCB)).